Consider the following 337-residue polypeptide: LIX1-like protein (337 aa).

The disordered stretch occupies residues 1-55 (METMRAQRLQPGVGVGGRGTLRALRPGVTGAPTSAATPPVGPPPAPPPPAPPLPP). A compositionally biased stretch (low complexity) spans 26–38 (PGVTGAPTSAATP). Pro residues predominate over residues 39-55 (PVGPPPAPPPPAPPLPP).

Belongs to the LIX1 family.

The protein is LIX1-like protein (Lix1l) of Mus musculus (Mouse).